We begin with the raw amino-acid sequence, 463 residues long: Adenosylhomocysteinase (463 aa).

Residues T54, D129, and E189 each coordinate substrate. Residue 190–192 (TTT) coordinates NAD(+). The substrate site is built by K219 and D223. Residues N224, 253–258 (GYGDVG), E276, N311, 332–334 (IGH), and N377 contribute to the NAD(+) site.

The protein belongs to the adenosylhomocysteinase family. The cofactor is NAD(+).

Its subcellular location is the cytoplasm. It carries out the reaction S-adenosyl-L-homocysteine + H2O = L-homocysteine + adenosine. Its pathway is amino-acid biosynthesis; L-homocysteine biosynthesis; L-homocysteine from S-adenosyl-L-homocysteine: step 1/1. May play a key role in the regulation of the intracellular concentration of adenosylhomocysteine. The sequence is that of Adenosylhomocysteinase from Caulobacter vibrioides (strain ATCC 19089 / CIP 103742 / CB 15) (Caulobacter crescentus).